A 437-amino-acid chain; its full sequence is Glutamyl-tRNA reductase (437 aa).

Substrate is bound by residues 49-52, Ser-109, 114-116, and Gln-120; these read TCNR and ETQ. Cys-50 acts as the Nucleophile in catalysis. Residue 189-194 participates in NADP(+) binding; the sequence is GAGKMS.

The protein belongs to the glutamyl-tRNA reductase family. In terms of assembly, homodimer.

The enzyme catalyses (S)-4-amino-5-oxopentanoate + tRNA(Glu) + NADP(+) = L-glutamyl-tRNA(Glu) + NADPH + H(+). Its pathway is porphyrin-containing compound metabolism; protoporphyrin-IX biosynthesis; 5-aminolevulinate from L-glutamyl-tRNA(Glu): step 1/2. Its function is as follows. Catalyzes the NADPH-dependent reduction of glutamyl-tRNA(Glu) to glutamate 1-semialdehyde (GSA). This is Glutamyl-tRNA reductase from Paenibacillus macerans (Bacillus macerans).